The primary structure comprises 254 residues: Glutathione S-transferase F14 (254 aa).

Residues 4–85 enclose the GST N-terminal domain; it reads SKMKLHCGFI…YLAEQYKDVG (82 aa). Residues 42 to 43, 56 to 57, and 69 to 70 each bind glutathione; these read AK, EV, and EP. The 140-residue stretch at 92-231 folds into the GST C-terminal domain; the sequence is DPKKRAIMSM…DLMKQRRLPI (140 aa).

This sequence belongs to the GST superfamily. Phi family.

It localises to the cytoplasm. It is found in the cytosol. The catalysed reaction is RX + glutathione = an S-substituted glutathione + a halide anion + H(+). Functionally, may be involved in the conjugation of reduced glutathione to a wide number of exogenous and endogenous hydrophobic electrophiles and have a detoxification role against certain herbicides. This is Glutathione S-transferase F14 from Arabidopsis thaliana (Mouse-ear cress).